Here is a 524-residue protein sequence, read N- to C-terminus: Lysophospholipid acyltransferase LPCAT4 (524 aa).

The next 2 membrane-spanning stretches (helical) occupy residues 40–62 and 87–107; these read CLLG…FLLW and TVCH…LGFL. Positions 129–134 match the HXXXXD motif motif; that stretch reads HSTFFD. The N-linked (GlcNAc...) asparagine glycan is linked to asparagine 152. The interval 490 to 524 is disordered; sequence PHKPRSTSQIPNASSPSSPTALANGTVQAPKQKGD. Residues 495–518 are compositionally biased toward polar residues; that stretch reads STSQIPNASSPSSPTALANGTVQA.

Belongs to the 1-acyl-sn-glycerol-3-phosphate acyltransferase family. In terms of tissue distribution, widely expressed with much higher level in brain. Expressed in erythroleukemic cells but not in reticulocytes.

It is found in the endoplasmic reticulum membrane. The catalysed reaction is a 1-acyl-sn-glycero-3-phosphoethanolamine + an acyl-CoA = a 1,2-diacyl-sn-glycero-3-phosphoethanolamine + CoA. It carries out the reaction a 1-O-(1Z-alkenyl)-sn-glycero-3-phosphoethanolamine + an acyl-CoA = a 1-O-(1Z-alkenyl)-2-acyl-sn-glycero-3-phosphoethanolamine + CoA. The enzyme catalyses a 1-acyl-sn-glycero-3-phosphocholine + an acyl-CoA = a 1,2-diacyl-sn-glycero-3-phosphocholine + CoA. It catalyses the reaction a 1-O-alkyl-sn-glycero-3-phosphocholine + acetyl-CoA = a 1-O-alkyl-2-acetyl-sn-glycero-3-phosphocholine + CoA. The catalysed reaction is a 1-acyl-sn-glycero-3-phospho-L-serine + an acyl-CoA = a 1,2-diacyl-sn-glycero-3-phospho-L-serine + CoA. It carries out the reaction octanoyl-CoA + a 1-acyl-sn-glycero-3-phosphoethanolamine = 1-acyl-2-octanoyl-sn-glycero-3-phosphoethanolamine + CoA. The enzyme catalyses a 1-acyl-sn-glycero-3-phosphoethanolamine + hexadecanoyl-CoA = 1-acyl-2-hexadecanoyl-sn-glycero-3-phosphoethanolamine + CoA. It catalyses the reaction a 1-acyl-sn-glycero-3-phosphoethanolamine + octadecanoyl-CoA = 1-acyl-2-octadecanoyl-sn-glycero-3-phosphoethanolamine + CoA. The catalysed reaction is a 1-acyl-sn-glycero-3-phosphoethanolamine + (9Z)-octadecenoyl-CoA = 1-acyl-2-(9Z)-octadecenoyl-sn-glycero-3-phosphoethanolamine + CoA. It carries out the reaction a 1-acyl-sn-glycero-3-phosphoethanolamine + (5Z,8Z,11Z,14Z)-eicosatetraenoyl-CoA = 1-acyl-2-(5Z,8Z,11Z,14Z)-eicosatetraenoyl-sn-glycero-3-phosphoethanolamine + CoA. The enzyme catalyses a 1-O-(1Z-alkenyl)-sn-glycero-3-phosphoethanolamine + octanoyl-CoA = 1-O-(1Z)-alkenyl-2-octanoyl-sn-glycero-3-phosphoethanolamine + CoA. It catalyses the reaction a 1-O-(1Z-alkenyl)-sn-glycero-3-phosphoethanolamine + hexadecanoyl-CoA = 1-O-(1Z)-alkenyl-2-hexadecanoyl-sn-glycero-3-phosphoethanolamine + CoA. The catalysed reaction is a 1-O-(1Z-alkenyl)-sn-glycero-3-phosphoethanolamine + octadecanoyl-CoA = 1-O-(1Z)-alkenyl-2-octadecanoyl-sn-glycero-3-phosphoethanolamine + CoA. It carries out the reaction a 1-O-(1Z-alkenyl)-sn-glycero-3-phosphoethanolamine + (9Z)-octadecenoyl-CoA = 1-O-(1Z)-alkenyl-2-(9Z)-octadecenoyl-sn-glycero-3-phosphoethanolamine + CoA. The enzyme catalyses a 1-O-(1Z-alkenyl)-sn-glycero-3-phosphoethanolamine + (5Z,8Z,11Z,14Z)-eicosatetraenoyl-CoA = 1-O-(1Z)-alkenyl-2-(5Z,8Z,11Z,14Z)-eicosatetraenoyl-sn-glycero-3-phosphoethanolamine + CoA. It catalyses the reaction a 1-acyl-sn-glycero-3-phosphocholine + hexadecanoyl-CoA = 1-acyl-2-hexadecanoyl-sn-glycero-3-phosphocholine + CoA. The catalysed reaction is a 1-acyl-sn-glycero-3-phosphocholine + (9Z)-octadecenoyl-CoA = a 1-acyl-2-(9Z)-octadecenoyl-sn-glycero-3-phosphocholine + CoA. It carries out the reaction 1-O-hexadecyl-sn-glycero-3-phosphocholine + (9Z)-octadecenoyl-CoA = 1-O-hexadecyl-2-(9Z)-octadecenoyl-sn-glycero-3-phosphocholine + CoA. The enzyme catalyses 1-O-hexadecyl-sn-glycero-3-phosphocholine + (5Z,8Z,11Z,14Z)-eicosatetraenoyl-CoA = 1-O-hexadecyl-2-(5Z,8Z,11Z,14Z)-eicosatetraenoyl-sn-glycero-3-phosphocholine + CoA. It catalyses the reaction 1-hexadecanoyl-sn-glycero-3-phospho-L-serine + (9Z)-octadecenoyl-CoA = 1-hexadecanoyl-2-(9Z-octadecenoyl)-sn-glycero-3-phospho-L-serine + CoA. The catalysed reaction is 1-octadecanoyl-sn-glycero-3-phospho-(1'-sn-glycerol) + (9Z)-octadecenoyl-CoA = 1-octadecanoyl-2-(9Z-octadecenoyl)-sn-glycero-3-phospho-(1'-sn-glycerol) + CoA. It carries out the reaction 1-octadecanoyl-sn-glycero-3-phospho-(1'-sn-glycerol) + (5Z,8Z,11Z,14Z)-eicosatetraenoyl-CoA = 1-octadecanoyl-2-(5Z,8Z,11Z,14Z-eicosatetraenoyl)-sn-glycero-3-phospho-(1'-sn-glycerol) + CoA. Its pathway is lipid metabolism; phospholipid metabolism. Displays acyl-CoA-dependent lysophospholipid acyltransferase activity with a subset of lysophospholipids as substrates; converts lysophosphatidylethanolamine to phosphatidylethanolamine, 1-alkenyl-lysophatidylethanolamine to 1-alkenyl-phosphatidylethanolamine, lysophosphatidylglycerol and alkyl-lysophosphatidylcholine to phosphatidylglycerol and alkyl-phosphatidylcholine, respectively. In contrast, has no lysophosphatidylinositol, glycerol-3-phosphate, diacylglycerol or lysophosphatidic acid acyltransferase activity. Prefers long chain acyl-CoAs (C16, C18) as acyl donors. Converts lysophosphatidylcholine to phosphatidycholine. The chain is Lysophospholipid acyltransferase LPCAT4 (Lpcat4) from Mus musculus (Mouse).